Reading from the N-terminus, the 116-residue chain is Large ribosomal subunit protein uL18 (116 aa).

Belongs to the universal ribosomal protein uL18 family. In terms of assembly, part of the 50S ribosomal subunit; part of the 5S rRNA/L5/L18/L25 subcomplex. Contacts the 5S and 23S rRNAs.

Its function is as follows. This is one of the proteins that bind and probably mediate the attachment of the 5S RNA into the large ribosomal subunit, where it forms part of the central protuberance. This Acinetobacter baylyi (strain ATCC 33305 / BD413 / ADP1) protein is Large ribosomal subunit protein uL18.